We begin with the raw amino-acid sequence, 102 residues long: Large ribosomal subunit protein bL21 (102 aa).

This sequence belongs to the bacterial ribosomal protein bL21 family. As to quaternary structure, part of the 50S ribosomal subunit. Contacts protein L20.

In terms of biological role, this protein binds to 23S rRNA in the presence of protein L20. This Exiguobacterium sibiricum (strain DSM 17290 / CCUG 55495 / CIP 109462 / JCM 13490 / 255-15) protein is Large ribosomal subunit protein bL21.